The sequence spans 707 residues: Ribosomal RNA large subunit methyltransferase K/L (707 aa).

Residues 44 to 155 (VIYNLCLWSR…NDILTVSFDL (112 aa)) enclose the THUMP domain.

The protein belongs to the methyltransferase superfamily. RlmKL family.

Its subcellular location is the cytoplasm. It carries out the reaction guanosine(2445) in 23S rRNA + S-adenosyl-L-methionine = N(2)-methylguanosine(2445) in 23S rRNA + S-adenosyl-L-homocysteine + H(+). It catalyses the reaction guanosine(2069) in 23S rRNA + S-adenosyl-L-methionine = N(2)-methylguanosine(2069) in 23S rRNA + S-adenosyl-L-homocysteine + H(+). In terms of biological role, specifically methylates the guanine in position 2445 (m2G2445) and the guanine in position 2069 (m7G2069) of 23S rRNA. This chain is Ribosomal RNA large subunit methyltransferase K/L, found in Legionella pneumophila (strain Corby).